A 414-amino-acid chain; its full sequence is Voltage-gated ClC-type chloride channel ClcB (414 aa).

11 helical membrane-spanning segments follow: residues Leu5–Ala25, Ala54–Tyr74, Ser116–Ala136, Leu147–Gly167, Leu169–Ile189, Val220–Leu240, Leu255–Phe275, Thr292–Ala312, Leu327–Leu347, Leu353–Met373, and Met381–Ile401.

It belongs to the chloride channel (TC 2.A.49) family. ClcB subfamily.

It localises to the cell inner membrane. In terms of biological role, probably acts as an electrical shunt for an outwardly-directed proton pump that is linked to amino acid decarboxylation, as part of the extreme acid resistance (XAR) response. This chain is Voltage-gated ClC-type chloride channel ClcB, found in Yersinia pestis.